We begin with the raw amino-acid sequence, 392 residues long: ATP phosphoribosyltransferase regulatory subunit (392 aa).

It belongs to the class-II aminoacyl-tRNA synthetase family. HisZ subfamily. Heteromultimer composed of HisG and HisZ subunits.

Its subcellular location is the cytoplasm. It functions in the pathway amino-acid biosynthesis; L-histidine biosynthesis; L-histidine from 5-phospho-alpha-D-ribose 1-diphosphate: step 1/9. Its function is as follows. Required for the first step of histidine biosynthesis. May allow the feedback regulation of ATP phosphoribosyltransferase activity by histidine. In Geobacillus sp. (strain WCH70), this protein is ATP phosphoribosyltransferase regulatory subunit.